The primary structure comprises 451 residues: Protein-tyrosine kinase 6 (451 aa).

An SH3 domain is found at 8-72 (HLGPKYVGLW…PHNYLAERET (65 aa)). A phosphotyrosine; by autocatalysis mark is found at Y13, Y61, Y66, and Y114. Positions 78-170 (WFFGCISRSE…SHGLRLAAPC (93 aa)) constitute an SH2 domain. Residues 171–190 (RKHEPEPLPHWDDWERPREE) are linker. In terms of domain architecture, Protein kinase spans 191–445 (FTLCRKLGSG…ALRERLSSFT (255 aa)). ATP is bound by residues 197–205 (LGSGYFGEV) and K219. Catalysis depends on D312, which acts as the Proton acceptor. A phosphotyrosine; by autocatalysis mark is found at Y342 and Y351. Y447 is modified (phosphotyrosine).

This sequence belongs to the protein kinase superfamily. Tyr protein kinase family. BRK/PTK6/SIK subfamily. As to quaternary structure, interacts with GAP-A.p65. Interacts (via SH3 and SH2 domains) with KHDRBS1. Interacts (via SH3 and SH2 domains) with phosphorylated IRS4. Interacts with ADAM15. Interacts (via SH3 domain) with SFPQ. Interacts with EGFR and ERBB2. Interacts with STAP2. Interacts with PNX. Interacts with SFPQ. Interacts with PTK/ATK. Interacts with CTNNB1. Post-translationally, autophosphorylated. Autophosphorylation of Tyr-342 leads to an increase of kinase activity. Tyr-447 binds to the SH2 domain when phosphorylated and negatively regulates kinase activity. In terms of tissue distribution, epithelia-specific. Very high level in colon and high levels in small intestine and prostate, and low levels in some fetal tissues. Not expressed in breast or ovarian tissue but expressed in high percentage of breast and ovarian cancers. Also overexpressed in some metastatic melanomas, lymphomas, colon cancers, squamous cell carcinomas and prostate cancers. Also found in melanocytes. Not expressed in heart, brain, placenta, lung, liver, skeletal muscle, kidney and pancreas. Isoform 2 is present in prostate epithelial cell lines derived from normal prostate and prostate adenocarcinomas, as well as in a variety of cell lines.

It localises to the cytoplasm. The protein localises to the nucleus. Its subcellular location is the cell projection. It is found in the ruffle. The protein resides in the membrane. The enzyme catalyses L-tyrosyl-[protein] + ATP = O-phospho-L-tyrosyl-[protein] + ADP + H(+). Activated by EGF, NRG1 and IGF1. Inhibited by SOCS3 to phosphorylate STAT3. Stabilized in the inactive form by an association between the SH3 domain and the SH2-TK linker region. Interaction between Trp-184 within SH2-TK linker region and the catalytic domain appears essential for positive regulation of kinase activity. In terms of biological role, non-receptor tyrosine-protein kinase implicated in the regulation of a variety of signaling pathways that control the differentiation and maintenance of normal epithelia, as well as tumor growth. Function seems to be context dependent and differ depending on cell type, as well as its intracellular localization. A number of potential nuclear and cytoplasmic substrates have been identified. These include the RNA-binding proteins: KHDRBS1/SAM68, KHDRBS2/SLM1, KHDRBS3/SLM2 and SFPQ/PSF; transcription factors: STAT3 and STAT5A/B and a variety of signaling molecules: ARHGAP35/p190RhoGAP, PXN/paxillin, BTK/ATK, STAP2/BKS. Phosphorylates the GTPase-activating protein ARAP1 following EGF stimulation which enhances EGFR signaling by delaying EGFR down-regulation. Also associates with a variety of proteins that are likely upstream of PTK6 in various signaling pathways, or for which PTK6 may play an adapter-like role. These proteins include ADAM15, EGFR, ERBB2, ERBB3 and IRS4. In normal or non-tumorigenic tissues, PTK6 promotes cellular differentiation and apoptosis. In tumors PTK6 contributes to cancer progression by sensitizing cells to mitogenic signals and enhancing proliferation, anchorage-independent survival and migration/invasion. Association with EGFR, ERBB2, ERBB3 may contribute to mammary tumor development and growth through enhancement of EGF-induced signaling via BTK/AKT and PI3 kinase. Contributes to migration and proliferation by contributing to EGF-mediated phosphorylation of ARHGAP35/p190RhoGAP, which promotes association with RASA1/p120RasGAP, inactivating RhoA while activating RAS. EGF stimulation resulted in phosphorylation of PNX/Paxillin by PTK6 and activation of RAC1 via CRK/CrKII, thereby promoting migration and invasion. PTK6 activates STAT3 and STAT5B to promote proliferation. Nuclear PTK6 may be important for regulating growth in normal epithelia, while cytoplasmic PTK6 might activate oncogenic signaling pathways. Functionally, inhibits PTK6 phosphorylation and PTK6 association with other tyrosine-phosphorylated proteins. This chain is Protein-tyrosine kinase 6 (PTK6), found in Homo sapiens (Human).